Reading from the N-terminus, the 219-residue chain is Transcriptional regulator AcuR (219 aa).

The interval 1–25 is disordered; the sequence is MPLTDTPPSVPQKPRRGRPRGAPDA. One can recognise an HTH tetR-type domain in the interval 26-86; the sequence is SLAHQSLIRA…ALIEAYDTYF (61 aa). A DNA-binding region (H-T-H motif) is located at residues 49-68; it reads GVDEILKAARVPKGSFYHYF.

Its function is as follows. A transcriptional repressor for its operon. Probably binds to 2 operator sequences in the promoter. The protein is Transcriptional regulator AcuR (acuR) of Cereibacter sphaeroides (strain ATCC 17023 / DSM 158 / JCM 6121 / CCUG 31486 / LMG 2827 / NBRC 12203 / NCIMB 8253 / ATH 2.4.1.) (Rhodobacter sphaeroides).